Reading from the N-terminus, the 423-residue chain is Phosphoribosylamine--glycine ligase (423 aa).

An ATP-grasp domain is found at 107-312; it reads KDLCARYDIP…LLPILYATAT (206 aa). 133 to 193 contributes to the ATP binding site; the sequence is VRAQGAPIVI…EAFLDGEEAS (61 aa). Residues Glu-282 and Asn-284 each coordinate Mg(2+).

This sequence belongs to the GARS family. Mg(2+) serves as cofactor. It depends on Mn(2+) as a cofactor.

It carries out the reaction 5-phospho-beta-D-ribosylamine + glycine + ATP = N(1)-(5-phospho-beta-D-ribosyl)glycinamide + ADP + phosphate + H(+). Its pathway is purine metabolism; IMP biosynthesis via de novo pathway; N(1)-(5-phospho-D-ribosyl)glycinamide from 5-phospho-alpha-D-ribose 1-diphosphate: step 2/2. This is Phosphoribosylamine--glycine ligase from Agrobacterium fabrum (strain C58 / ATCC 33970) (Agrobacterium tumefaciens (strain C58)).